We begin with the raw amino-acid sequence, 390 residues long: DNA polymerase IV (390 aa).

Positions 6–187 (VMHVDLDAFF…LDISIMPGIG (182 aa)) constitute a UmuC domain. Residues aspartate 10 and aspartate 105 each contribute to the Mg(2+) site. Glutamate 106 is an active-site residue.

This sequence belongs to the DNA polymerase type-Y family. In terms of assembly, monomer. The cofactor is Mg(2+).

The protein resides in the cytoplasm. It carries out the reaction DNA(n) + a 2'-deoxyribonucleoside 5'-triphosphate = DNA(n+1) + diphosphate. Functionally, poorly processive, error-prone DNA polymerase involved in untargeted mutagenesis. Copies undamaged DNA at stalled replication forks, which arise in vivo from mismatched or misaligned primer ends. These misaligned primers can be extended by PolIV. Exhibits no 3'-5' exonuclease (proofreading) activity. May be involved in translesional synthesis, in conjunction with the beta clamp from PolIII. The protein is DNA polymerase IV of Dehalococcoides mccartyi (strain ATCC BAA-2266 / KCTC 15142 / 195) (Dehalococcoides ethenogenes (strain 195)).